The sequence spans 97 residues: YcgL domain-containing protein Maqu_1609 (97 aa).

The 85-residue stretch at 5–89 (EFVSVFRSSK…EQDTYIVDFK (85 aa)) folds into the YcgL domain.

This is YcgL domain-containing protein Maqu_1609 from Marinobacter nauticus (strain ATCC 700491 / DSM 11845 / VT8) (Marinobacter aquaeolei).